The primary structure comprises 368 residues: Quinolinate synthase (368 aa).

Iminosuccinate-binding residues include His-46 and Ser-63. Cys-110 is a [4Fe-4S] cluster binding site. Residues 141–143 and Ser-162 contribute to the iminosuccinate site; that span reads YVN. Cys-230 serves as a coordination point for [4Fe-4S] cluster. Iminosuccinate-binding positions include 256 to 258 and Thr-273; that span reads HPE. [4Fe-4S] cluster is bound at residue Cys-320.

Belongs to the quinolinate synthase family. Type 3 subfamily. The cofactor is [4Fe-4S] cluster.

The protein localises to the cytoplasm. It carries out the reaction iminosuccinate + dihydroxyacetone phosphate = quinolinate + phosphate + 2 H2O + H(+). The protein operates within cofactor biosynthesis; NAD(+) biosynthesis; quinolinate from iminoaspartate: step 1/1. In terms of biological role, catalyzes the condensation of iminoaspartate with dihydroxyacetone phosphate to form quinolinate. The chain is Quinolinate synthase from Bacillus thuringiensis (strain Al Hakam).